We begin with the raw amino-acid sequence, 143 residues long: Transcriptional regulator MraZ (143 aa).

SpoVT-AbrB domains follow at residues 5–47 (TFTP…PKAE) and 76–119 (ADEQ…DAES).

The protein belongs to the MraZ family. In terms of assembly, forms oligomers.

The protein localises to the cytoplasm. It localises to the nucleoid. In Corynebacterium jeikeium (strain K411), this protein is Transcriptional regulator MraZ.